Consider the following 88-residue polypeptide: Phosphocarrier protein HPr (88 aa).

Residues 1 to 88 (MAEKTFKVVS…DTLAKEGLAE (88 aa)) enclose the HPr domain. S12 bears the Phosphoserine mark. H15 acts as the Pros-phosphohistidine intermediate in catalysis. S46 carries the phosphoserine; by HPrK/P modification.

Belongs to the HPr family.

Its subcellular location is the cytoplasm. Phosphorylation on Ser-46 inhibits the phosphoryl transfer from enzyme I to HPr. Its function is as follows. General (non sugar-specific) component of the phosphoenolpyruvate-dependent sugar phosphotransferase system (sugar PTS). This major carbohydrate active-transport system catalyzes the phosphorylation of incoming sugar substrates concomitantly with their translocation across the cell membrane. The phosphoryl group from phosphoenolpyruvate (PEP) is transferred to the phosphoryl carrier protein HPr by enzyme I. Phospho-HPr then transfers it to the PTS EIIA domain. Functionally, P-Ser-HPr interacts with the catabolite control protein A (CcpA), forming a complex that binds to DNA at the catabolite response elements cre, operator sites preceding a large number of catabolite-regulated genes. Thus, P-Ser-HPr is a corepressor in carbon catabolite repression (CCR), a mechanism that allows bacteria to coordinate and optimize the utilization of available carbon sources. P-Ser-HPr also plays a role in inducer exclusion, in which it probably interacts with several non-PTS permeases and inhibits their transport activity. In Geobacillus stearothermophilus (Bacillus stearothermophilus), this protein is Phosphocarrier protein HPr (ptsH).